The primary structure comprises 292 residues: Hypoxia responsive morphology factor A (292 aa).

The short motif at 48 to 70 (RRNGRRRNLEYVAQHRRKIARKI) is the Bipartite nuclear localization signal element. The segment at 156-186 (GKEHYSLHLSTLPAIRNAFGDVIFDAIERSP) is RNA recognition motif (RRM)-like domain.

Belongs to the hrmA family.

Its subcellular location is the nucleus. Hypoxia responsive morphology factor that modulates the expression of the subtelomeric hrmA-associated cluster (HAC) containing genes that alter the hyphal surface (such as reduced total chitin or increased beta-glucan exposure) and perturb inter-hyphal interactions within the developing biofilms, resulting in a loss of vertically aligned polarized growing filaments. Consequently, this hypoxia-typic morphotype (called H-MORPH) with altered biofilm architecture leads to increased hypoxia fitness, increased host inflammation, rapid disease progression, and mortality in a murine model of invasive aspergillosis. The chain is Hypoxia responsive morphology factor A from Aspergillus fumigatus (strain CBS 144.89 / FGSC A1163 / CEA10) (Neosartorya fumigata).